We begin with the raw amino-acid sequence, 300 residues long: MTHLKISKTAPAVARFLPAGRIASVAAALSLFLSAQLAGAVTLEEVKARGYITIAIANEMPGSYTDPNGEVKGSEADVARRVLEKLGIKPENIQWVVTTFGSLIPGLQANRFDMTAAGMAIRPERCEKVIYSEPNSSYGEGMLVIKGNPRNFHSYEDVAQQGKIAIMAGADQLRMMQALGVPNENIITIAANADAISAVATGRADAYAAAASTAADLAKKSDKVELATPFQDPVIDGKIQRSWGAFSFNKESADLRDKFNEALLEFRKTDEFKQLLLGYGYLPESIAAIPDKTTKELCSN.

The signal sequence occupies residues 1-27; that stretch reads MTHLKISKTAPAVARFLPAGRIASVAA.

Belongs to the bacterial solute-binding protein 3 family.

It localises to the periplasm. Its function is as follows. Probably part of the binding-protein-dependent transport system y4tEFGH for an amino acid. The polypeptide is Probable amino-acid ABC transporter periplasmic-binding protein y4tE (Sinorhizobium fredii (strain NBRC 101917 / NGR234)).